Consider the following 941-residue polypeptide: MAGAAPRRLGCDALIVVGGSAMPRRVLHVPVHVRACNLTQELSTGEDARFCRPRPVNVERVRAVFAALYRACPIHVRTEPERVKLVLGRLLLGPVAVPCFCDGEVEGHGEHLVPTTQFCRGPLLYVHRRCCCGSVTAGRALSYHVLENHVATHVLRGLLSLTEWNRELPSLFCDCPGGGGASGTEERYAMACLPRDLSLHLDDYPYLMVEIGRVLSVSEVDDYVTAVSGYLGEAAAPRIQVHYKLLFGLNVRPQAPCALDATRDFFLLELQKLWLGVEYHHEVTSEFFGRVLAQLHRDRARVMMALRLPEQTVCHLSTFVLSRFKRQVLYFKLQVSYGKCRTGHADRSGGGGNGGNQGHHNLLCYRRLSVTFADTDTVWRNLFYVYYELARDLGSHGTEDRPVSRGYGVSCASRTSRLSPSESTVVSANGHALSSTALPTTSAGHKLSLPRDPAADRVRRYVCIISRLMYARYGERWRKHCQRRSETGEEEEEETLESGETDATPPFDFTGQQLRRAYQEHRRRKHLAVQRYAPCRRKLIGGMEFAEVTGVSLDRIAVNAFNTNRVINMKAALSSIAASGLGVRAPRLPKNMTHSFVMYKHTFKEPACTVSTFVSNDAVYINSLNVNIRGSYPEFLYSLGVYRLHVNIDHFFLPAVVCNSNSSLDVHGLEDQAVIRSERSKVYWTTNFPCMISHTNNVNVGWFKAATAIVPRVSGADLEAILLKELSCIKNMRDVCIDYGLHRVFTQLELRNSYQIPFLAKQLVLFLRACLLKLHGREKRLQLDRLVFEAAQRGLFDYSKNLTAHTKIKHTCALIGSRLANNVPKILARNKKVKLDHLGRNANVLTVCRHVEAHKIPRTRLKVLVEVLGALQSISGTPHTREVIHQTLFRLCSAAAATSGLCSSPPPLCVSSSSSVPSVPTSVSVDGSSEPTSPRARFASR.

A glycan (N-linked (GlcNAc...) asparagine; by host) is linked at N37. Residues 482–508 (QRRSETGEEEEEETLESGETDATPPFD) form a disordered region. A compositionally biased stretch (acidic residues) spans 488–500 (GEEEEEETLESGE). 3 N-linked (GlcNAc...) asparagine; by host glycosylation sites follow: N591, N661, and N801. The span at 910-929 (VSSSSSVPSVPTSVSVDGSS) shows a compositional bias: low complexity. The segment at 910 to 941 (VSSSSSVPSVPTSVSVDGSSEPTSPRARFASR) is disordered.

This sequence belongs to the herpesviridae UL87 family.

It is found in the host nucleus. In terms of biological role, functions concordantly with UL87 to initiate transcription from over half of all active viral promoters in late infection, without affecting host transcription. Acts on and binds to viral early-late and late kinetic-class promoters. This chain is Protein UL87 (UL87), found in Homo sapiens (Human).